The chain runs to 338 residues: DNA-directed RNA polymerase subunit alpha (338 aa).

Residues 1 to 234 (MIHKNWAELI…DQLSVFVNFD (234 aa)) are alpha N-terminal domain (alpha-NTD). An alpha C-terminal domain (alpha-CTD) region spans residues 250-338 (FDPRLLKKVD…DLAKRFDDQF (89 aa)).

Belongs to the RNA polymerase alpha chain family. As to quaternary structure, homodimer. The RNAP catalytic core consists of 2 alpha, 1 beta, 1 beta' and 1 omega subunit. When a sigma factor is associated with the core the holoenzyme is formed, which can initiate transcription.

The enzyme catalyses RNA(n) + a ribonucleoside 5'-triphosphate = RNA(n+1) + diphosphate. DNA-dependent RNA polymerase catalyzes the transcription of DNA into RNA using the four ribonucleoside triphosphates as substrates. This is DNA-directed RNA polymerase subunit alpha from Paracoccus denitrificans (strain Pd 1222).